The sequence spans 557 residues: Formate--tetrahydrofolate ligase (557 aa).

An ATP-binding site is contributed by 67 to 74; sequence TPAGEGKS.

This sequence belongs to the formate--tetrahydrofolate ligase family.

It catalyses the reaction (6S)-5,6,7,8-tetrahydrofolate + formate + ATP = (6R)-10-formyltetrahydrofolate + ADP + phosphate. Its pathway is one-carbon metabolism; tetrahydrofolate interconversion. The protein is Formate--tetrahydrofolate ligase of Lacticaseibacillus paracasei (strain ATCC 334 / BCRC 17002 / CCUG 31169 / CIP 107868 / KCTC 3260 / NRRL B-441) (Lactobacillus paracasei).